A 302-amino-acid chain; its full sequence is 4-diphosphocytidyl-2-C-methyl-D-erythritol kinase (302 aa).

The active site involves K27. Position 110–120 (110–120) interacts with ATP; it reads PMGGGVGGGSS. The active site involves D152.

Belongs to the GHMP kinase family. IspE subfamily.

It catalyses the reaction 4-CDP-2-C-methyl-D-erythritol + ATP = 4-CDP-2-C-methyl-D-erythritol 2-phosphate + ADP + H(+). The protein operates within isoprenoid biosynthesis; isopentenyl diphosphate biosynthesis via DXP pathway; isopentenyl diphosphate from 1-deoxy-D-xylulose 5-phosphate: step 3/6. Functionally, catalyzes the phosphorylation of the position 2 hydroxy group of 4-diphosphocytidyl-2C-methyl-D-erythritol. This is 4-diphosphocytidyl-2-C-methyl-D-erythritol kinase from Mannheimia succiniciproducens (strain KCTC 0769BP / MBEL55E).